Reading from the N-terminus, the 197-residue chain is Protein SYM1 (197 aa).

4 helical membrane-spanning segments follow: residues Ala-20–Thr-40, Ala-55–Asn-75, Val-97–Met-117, and Leu-137–Leu-157.

It belongs to the peroxisomal membrane protein PXMP2/4 family.

It is found in the mitochondrion inner membrane. In terms of biological role, may be involved in cellular response to stress. Required to maintain mitochondrial DNA (mtDNA) integrity and stability. Required for ethanol metabolism and tolerance during heat shock. This chain is Protein SYM1 (SYM1), found in Saccharomyces cerevisiae (strain ATCC 204508 / S288c) (Baker's yeast).